A 61-amino-acid chain; its full sequence is Small ribosomal subunit protein uS14B (61 aa).

Positions 24, 27, 40, and 43 each coordinate Zn(2+).

The protein belongs to the universal ribosomal protein uS14 family. Zinc-binding uS14 subfamily. Part of the 30S ribosomal subunit. Contacts proteins S3 and S10. It depends on Zn(2+) as a cofactor.

Binds 16S rRNA, required for the assembly of 30S particles and may also be responsible for determining the conformation of the 16S rRNA at the A site. The chain is Small ribosomal subunit protein uS14B from Myxococcus xanthus (strain DK1622).